A 388-amino-acid chain; its full sequence is Ribonuclease D (388 aa).

Residues 7 to 173 enclose the 3'-5' exonuclease domain; that stretch reads ITDSKTLAQF…QIFPKMLEEL (167 aa). The HRDC domain occupies 212-293; that stretch reads KADVLGRLKA…ASHAPLAKEE (82 aa).

This sequence belongs to the RNase D family. A divalent metal cation is required as a cofactor.

The protein localises to the cytoplasm. The catalysed reaction is Exonucleolytic cleavage that removes extra residues from the 3'-terminus of tRNA to produce 5'-mononucleotides.. Exonuclease involved in the 3' processing of various precursor tRNAs. Initiates hydrolysis at the 3'-terminus of an RNA molecule and releases 5'-mononucleotides. This chain is Ribonuclease D, found in Sphingobium indicum (strain DSM 16413 / CCM 7287 / MTCC 6362 / UT26 / NBRC 101211 / UT26S) (Sphingobium japonicum).